A 25-amino-acid chain; its full sequence is LDVKKIICVACKIRPNPACKKICPK.

Cystine bridges form between C8-C23 and C11-C19.

Its subcellular location is the target cell membrane. It is found in the secreted. Antimicrobial peptide active against Gram-positive bacteria M.luteus (MIC=0.8 uM) and B.subtilis (MIC=1.5 uM). Less active against Gram-negative bacteria E.coli (MIC=32.5 uM) and yeast C.albicans (MIC=18.7 uM). Not active against S.aureus and P.aeruginosa. Has no hemolytic activity against human erythrocytes. Probably acts by disrupting membranes of target cells. This is Panurgine R from Panurgus calcaratus (Solitary bee).